We begin with the raw amino-acid sequence, 100 residues long: Serine protease inhibitor 1 protein (100 aa).

The signal sequence occupies residues 1 to 20; sequence MKHLLIVSLVFVTIIWKIEC. 5 disulfides stabilise this stretch: Cys-42-Cys-74, Cys-51-Cys-69, Cys-54-Cys-65, Cys-58-Cys-93, and Cys-76-Cys-90. The TIL domain occupies 42 to 93; sequence CGLNEVWMVCSSCEEECGKTPQPCPRICQPARCQCPAHKGYRRDGQGNCIFC.

The protein resides in the secreted. In Caenorhabditis elegans, this protein is Serine protease inhibitor 1 protein.